The chain runs to 148 residues: Thiol-disulfide oxidoreductase YkuV (148 aa).

Residues 2–145 enclose the Thioredoxin domain; the sequence is KLRQPMPELT…LEKRVNRVLA (144 aa). Cys41 and Cys44 are joined by a disulfide.

Monomer.

The protein resides in the cytoplasm. Its function is as follows. Participates in various redox reactions through the reversible oxidation of its active center dithiol to a disulfide and catalyzes dithiol-disulfide exchange reactions. This chain is Thiol-disulfide oxidoreductase YkuV (ykuV), found in Bacillus subtilis (strain 168).